Here is a 655-residue protein sequence, read N- to C-terminus: Fidgetin-like protein 1 (655 aa).

A disordered region spans residues glutamine 289 to glycine 313. ATP contacts are provided by residues alanine 385 and glycine 425 to leucine 430.

Belongs to the AAA ATPase family. Hexamer. It depends on Mg(2+) as a cofactor.

It is found in the nucleus. It localises to the cytoplasm. Its subcellular location is the perinuclear region. It carries out the reaction ATP + H2O = ADP + phosphate + H(+). Its function is as follows. May be involved in DNA double-strand break (DBS) repair via homologous recombination (HR). May regulate osteoblast proliferation and differentiation. The protein is Fidgetin-like protein 1 (fignl1) of Xenopus laevis (African clawed frog).